The primary structure comprises 413 residues: Gamma-glutamyl phosphate reductase (413 aa).

Belongs to the gamma-glutamyl phosphate reductase family.

The protein localises to the cytoplasm. It carries out the reaction L-glutamate 5-semialdehyde + phosphate + NADP(+) = L-glutamyl 5-phosphate + NADPH + H(+). Its pathway is amino-acid biosynthesis; L-proline biosynthesis; L-glutamate 5-semialdehyde from L-glutamate: step 2/2. In terms of biological role, catalyzes the NADPH-dependent reduction of L-glutamate 5-phosphate into L-glutamate 5-semialdehyde and phosphate. The product spontaneously undergoes cyclization to form 1-pyrroline-5-carboxylate. This Alkaliphilus oremlandii (strain OhILAs) (Clostridium oremlandii (strain OhILAs)) protein is Gamma-glutamyl phosphate reductase.